The following is a 942-amino-acid chain: Zinc finger protein 865 (942 aa).

The interval 66–106 is disordered; it reads FASTSTSKPKEFKVEAPPSSSLSPSKKPDIATTQQFNNQPP. Residues 96–106 are compositionally biased toward polar residues; the sequence is ATTQQFNNQPP. 20 C2H2-type zinc fingers span residues 172–194, 200–222, 282–304, 310–332, 338–360, 367–389, 466–488, 494–516, 522–544, 564–586, 592–614, 678–700, 706–728, 734–756, 762–784, 790–812, 818–840, 846–868, 874–896, and 902–924; these read FPCTVCQKSFKQSSHLVQHMLVH, YECNTCGRTYNHISSLIRHRRCH, FTCTLCWKVFKKQSHLHQHQIIH, FSCSVCAKSFNRRESLKRHVKTH, VQCEVCGKSFRDTSYLLKHQATH, YKCELCGKSYAAPQSLLRHKQVH, FCCNVCGRGFGRRETLKRHERIH, HQCSVCGKRFRESFHLTKHHVVH, YKCELCGKVFGYPQSLTRHKQIH, FGCTDCGERFPDSFHLMNHKELH, YVCDTCGKCFGFIENLMWHKLVH, FSCSICGQSFKHFLGLVTHKYVH, LACNVCGQNFAGAYDLLLHRRTH, FTCSVCGKRFWEAALLMRHQRCH, YRCTICGRGFLHSWYLRQHKVVH, YKCALCNKRFAQSSSLAEHQRLH, QRCPTCGKTFRYRSNLLEHQRVH, YRCDQCGKSFFYISSILRHQRSH, LRCSCCLKLFKDPKYFSKHVQTH, and FKCGACGEAFSNTYGLKKHRHAH.

This sequence belongs to the krueppel C2H2-type zinc-finger protein family.

The protein localises to the nucleus. Functionally, may be involved in transcriptional regulation. This chain is Zinc finger protein 865 (znf865), found in Xenopus tropicalis (Western clawed frog).